A 355-amino-acid chain; its full sequence is Methylxanthine N3-demethylase NdmB (355 aa).

The region spanning Trp-19 to Val-131 is the Rieske domain. 4 residues coordinate [2Fe-2S] cluster: Cys-64, His-66, Cys-87, and His-90.

[2Fe-2S] cluster serves as cofactor.

The enzyme catalyses theobromine + NADH + O2 + H(+) = 7-methylxanthine + formaldehyde + NAD(+) + H2O. It carries out the reaction theobromine + NADPH + O2 + H(+) = 7-methylxanthine + formaldehyde + NADP(+) + H2O. The catalysed reaction is 3-methylxanthine + NADH + O2 + H(+) = xanthine + formaldehyde + NAD(+) + H2O. It catalyses the reaction 3-methylxanthine + NADPH + O2 + H(+) = xanthine + formaldehyde + NADP(+) + H2O. Functionally, involved in the caffeine degradation, which is the essential first step for assimilating the carbon and nitrogen in caffeine. Catalyzes the N3-demethylation of theobromine to produce 7-methylxanthine and formaldehyde. Also catalyzes the N3-demethylation of 3-methylxanthine, caffeine, and theophylline to xanthine, paraxanthine, and 1-methylxanthine, respectively. NADH is the preferred substrate. This chain is Methylxanthine N3-demethylase NdmB (ndmB), found in Pseudomonas putida (Arthrobacter siderocapsulatus).